Consider the following 1272-residue polypeptide: Myosin-3 (1272 aa).

Residues 1–20 form a disordered region; it reads MAVIKKGARRKDVKEPKKRS. One can recognise a Myosin motor domain in the interval 36 to 715; sequence VGISDLTLLS…SLFALEDMRD (680 aa). 129–136 is a binding site for ATP; that stretch reads GESGAGKT. Ser-357 is subject to Phosphoserine. Residues 588-610 form an actin-binding region; the sequence is ANELVETLSKAEPSYIRTIKPNQ. IQ domains are found at residues 719-739 and 740-765; these read YNMA…RIDA and AIKI…YGTK. One can recognise a TH1 domain in the interval 771 to 961; that stretch reads KERRSMSLLG…TIYVRRGHPA (191 aa). Disordered regions lie at residues 951–1015, 1029–1141, and 1217–1272; these read STIY…QKPV, YNPK…SELP, and VQFG…DDDW. Residues 980–1000 show a composition bias toward basic residues; sequence IKSKKSKHKSTHKHTHSHRSH. Residues 1066–1078 are compositionally biased toward low complexity; it reads KKASSSHKSSSAK. Residues 1089–1098 show a composition bias toward basic and acidic residues; sequence GVEKNKEPLK. Over residues 1109–1118 the composition is skewed to pro residues; the sequence is PIPPPPPPMG. The 63-residue stretch at 1120–1182 folds into the SH3 domain; that stretch reads PKDPKFEAAY…PTAYMTPYKD (63 aa). Over residues 1217 to 1236 the composition is skewed to polar residues; that stretch reads VQFGSATVGPTSDNQSNPVG. Residues 1258 to 1272 are compositionally biased toward acidic residues; the sequence is ADDDDNDDGDDDDDW.

Belongs to the TRAFAC class myosin-kinesin ATPase superfamily. Myosin family. Interacts (via myosin motor domain) with SHE4; this interaction is important for proper localization and may regulate the interaction of the motor domain with actin. Interacts (via SH3 domain) with VRP1; this interaction is required for localization to sites of polarized growth and may regulate the interaction of the tail domain with actin. Interacts (via SH3 domain) with PAN1; this interaction is important for late stages of endocytopsis. Interacts (via SH3 domain) with BBC1 and LAS17. Interacts (via C-terminal acidic tail) with ARC19 and ARC40; ARC19 and ARC40 are Arp2/3 complex subunits. Phosphorylation of the TEDS site (Ser-357) is required for the polarization of the actin cytoskeleton and for ligand-induced, but not for constitutive internalization of STE2. Phosphorylation probably activates the myosin-I ATPase. Ser-357 is phosphorylated by CLA4 and STE20 in vitro.

The protein resides in the cytoplasm. Its subcellular location is the cytoskeleton. The protein localises to the actin patch. Its function is as follows. One of two redundant type-I myosins implicated in the organization of the actin cytoskeleton. Required for proper actin cytoskeleton polarization and for the internalization step in endocytosis. At the cell cortex, assembles in patch-like structures together with proteins from the actin-polymerizing machinery and promotes actin assembly. Functions redundantly with LAS17 as actin nucleation-promoting factor (NPF) for the Arp2/3 complex. Motor domain phosphorylation by PAK kinases CLA4 and STE20 promotes CDC42-regulated actin assembly. Functions together with the NPF PAN1 in late stages of endocytosis. Motor domain phosphorylation by PDK1 kinases PKH1 and PKH2, and by SGK kinases YPK1 and YPK2, promotes ligand-induced, but not constitutive endocytosis of the G protein-coupled receptor STE2. The sequence is that of Myosin-3 (MYO3) from Saccharomyces cerevisiae (strain ATCC 204508 / S288c) (Baker's yeast).